We begin with the raw amino-acid sequence, 338 residues long: MAKMSTTHEEIALAGPDGIPAVDLRDLIDAQLYMPFPFERNPHASEAAAGVDHWLSTWGLTDDPAVAAMISCTRPAELAAFNGPDMDSGLLQIAANQIAYQFVFDDRAEDIGRHSPGRLLPMLSESVAILRDGQPPTTPLGAALADLHRQVQERCTPAQAARWAWNSREYVHGLLYEAVAQAHPAPVESGLCRSIRSLIAGVEPFYPLCEAAQRCELAPEELHHPAMRRLSRLSADAAVWIPDLFSAVKEQRAGGMINLALAYRRTHRCSLPAAVTLAVRHINSTIREFEDLYGEVRPELSPSGIGYVEGMAGWIRGCYFWSRTVPRYADTLTAPAGL.

Asp-105 and Glu-109 together coordinate Mg(2+). The DDXXE motif motif lies at 105–109 (DDRAE). Arg-196 provides a ligand contact to substrate. Position 246 (Ser-246) interacts with Mg(2+). A substrate-binding site is contributed by Lys-249. Glu-250 is a Mg(2+) binding site. A substrate-binding site is contributed by 327–328 (RY).

It belongs to the terpene synthase family. It depends on Mg(2+) as a cofactor.

The enzyme catalyses (2E,6E)-farnesyl diphosphate = (-)-alpha-amorphene + diphosphate. It participates in secondary metabolite biosynthesis; terpenoid biosynthesis. Catalyzes the conversion of (2E,6E)-farnesyl diphosphate (FPP) to yield the bicyclic sesquiterpene (1R,6S,7S)-(-)-alpha-amorphene via a probable 1,6-cyclization, which could involve the abstraction of the pyrophosphate from FPP to yield a (R)-bisabolyl cation. The only accepted substrate is (2E,6E)-farnesyl diphosphate (FPP). This chain is (-)-alpha-amorphene synthase ((2E,6E)-farnesyl diphosphate cyclizing), found in Streptomyces viridochromogenes (strain DSM 40736 / JCM 4977 / BCRC 1201 / Tue 494).